We begin with the raw amino-acid sequence, 111 residues long: Disintegrin piscivostatin-alpha (111 aa).

The signal sequence occupies residues 1 to 20 (MIQVLLVTICLAVFPYQGSS). The propeptide occupies 21 to 44 (IILESGNVNDYEVVYPRKITPLPK). The Disintegrin domain maps to 45–111 (GAVQPKNPCC…GDCPRKHFYA (67 aa)). 4 disulfide bridges follow: Cys53/Cys76, Cys67/Cys73, Cys72/Cys97, and Cys85/Cys104. The short motif at 89-91 (RGD) is the Cell attachment site element. A propeptide spanning residues 110-111 (YA) is cleaved from the precursor.

Belongs to the disintegrin family. Dimeric disintegrin subfamily. In terms of assembly, heterodimer with piscivostatin-beta; disulfide-linked. As to expression, expressed by the venom gland.

Its subcellular location is the secreted. Its function is as follows. Inhibits fibrinogen interaction with platelets. Acts by binding to alpha-IIb/beta-3 (ITGA2B/ITGB3) on the platelet surface and inhibits both ADP-induced platelet aggregation and platelet aggregate dissociation in human platelet-rich plasma. In Agkistrodon piscivorus piscivorus (Eastern cottonmouth), this protein is Disintegrin piscivostatin-alpha.